We begin with the raw amino-acid sequence, 204 residues long: Inactive ribonuclease-like protein 9 (204 aa).

Positions 1-26 (MMRTLITTHPLLLLLLLQQLLQPVQL) are cleaved as a signal peptide. Disulfide bonds link cysteine 97-cysteine 152, cysteine 115-cysteine 167, and cysteine 122-cysteine 129. 2 N-linked (GlcNAc...) asparagine glycosylation sites follow: asparagine 130 and asparagine 142.

The protein belongs to the pancreatic ribonuclease family.

It is found in the secreted. Its function is as follows. Does not exhibit any ribonuclease activity. In Chlorocebus aethiops (Green monkey), this protein is Inactive ribonuclease-like protein 9 (RNASE9).